A 350-amino-acid polypeptide reads, in one-letter code: Small ribosomal subunit biogenesis GTPase RsgA (350 aa).

Residues 1 to 17 (MSKNKLSKGQQRRVNAN) are compositionally biased toward polar residues. The segment at 1-27 (MSKNKLSKGQQRRVNANHQRRLKTSAE) is disordered. One can recognise a CP-type G domain in the interval 104 to 273 (TSVLTRPDFY…VIDSPGVREF (170 aa)). Residues 160–163 (NKID) and 214–222 (GQSGVGKSS) each bind GTP. Residues C297, C302, H304, and C310 each contribute to the Zn(2+) site.

The protein belongs to the TRAFAC class YlqF/YawG GTPase family. RsgA subfamily. As to quaternary structure, monomer. Associates with 30S ribosomal subunit, binds 16S rRNA. Requires Zn(2+) as cofactor.

The protein resides in the cytoplasm. One of several proteins that assist in the late maturation steps of the functional core of the 30S ribosomal subunit. Helps release RbfA from mature subunits. May play a role in the assembly of ribosomal proteins into the subunit. Circularly permuted GTPase that catalyzes slow GTP hydrolysis, GTPase activity is stimulated by the 30S ribosomal subunit. The chain is Small ribosomal subunit biogenesis GTPase RsgA from Salmonella agona (strain SL483).